A 705-amino-acid polypeptide reads, in one-letter code: Effector protein hopD1 (705 aa).

2 stretches are compositionally biased toward polar residues: residues 1–11 (MNPLRSIQHNI) and 28–41 (QAQQ…SPSQ). Disordered regions lie at residues 1–41 (MNPL…SPSQ) and 173–207 (SSSL…DSGS). Residues 173 to 184 (SSSLETPLLSSP) are compositionally biased toward low complexity.

The protein resides in the secreted. Effector protein involved in non-host recognition. In Pseudomonas syringae pv. tomato (strain ATCC BAA-871 / DC3000), this protein is Effector protein hopD1 (hopD1).